A 301-amino-acid polypeptide reads, in one-letter code: 2-aminobenzoylacetyl-CoA thioesterase (301 aa).

His-69, His-71, Asp-73, His-74, His-159, Asp-178, and His-221 together coordinate Fe cation.

Belongs to the metallo-beta-lactamase superfamily.

It carries out the reaction (2-aminobenzoyl)acetyl-CoA + H2O = (2-aminobenzoyl)acetate + CoA + H(+). With respect to regulation, thioesterase activity, but not pyocyanine production, is inhibited by 2-(pyridin-3-yl)benzoic acid, 2-(1H-pyrrol-1-yl)benzoic acid and 3-methylthiophene-2-carboxylic acid. Compounds bind to the active center. In terms of biological role, required for the biosynthesis of the quorum-sensing signaling molecules 2-heptyl-4(1H)-quinolone (HHQ) and 2-heptyl-3-hydroxy-4(1H)-quinolone (Pseudomonas quinolone signal or PQS), which are important for biofilm formation and virulence. Catalyzes the hydrolysis of the intermediate 2-aminobenzoylacetyl-CoA (2-ABA-CoA) to form 2-aminobenzoylacetate (2-ABA), the precursor of HHQ. In vitro, can also hydrolyze other substrates such as S-ethyl-acetothioacetate and acetoacetyl-CoA, but is inactive against anthraniloyl-CoA, malonyl-CoA and octanoyl-CoA. Beyond its thioesterase function, is involved in the regulation of diverse genes coding for key virulence determinants and biofilm development. The sequence is that of 2-aminobenzoylacetyl-CoA thioesterase from Pseudomonas aeruginosa (strain ATCC 15692 / DSM 22644 / CIP 104116 / JCM 14847 / LMG 12228 / 1C / PRS 101 / PAO1).